The following is a 220-amino-acid chain: Glycerol-3-phosphate acyltransferase (220 aa).

6 consecutive transmembrane segments (helical) span residues 11 to 31, 70 to 90, 96 to 116, 127 to 147, 153 to 173, and 193 to 213; these read INVI…GYAL, LLVL…SKLF, LQWM…FLNF, GSVV…WFFV, ISSL…FFVP, and MVLI…NLLA.

Belongs to the PlsY family. As to quaternary structure, probably interacts with PlsX.

Its subcellular location is the cell inner membrane. The enzyme catalyses an acyl phosphate + sn-glycerol 3-phosphate = a 1-acyl-sn-glycero-3-phosphate + phosphate. The protein operates within lipid metabolism; phospholipid metabolism. Catalyzes the transfer of an acyl group from acyl-phosphate (acyl-PO(4)) to glycerol-3-phosphate (G3P) to form lysophosphatidic acid (LPA). This enzyme utilizes acyl-phosphate as fatty acyl donor, but not acyl-CoA or acyl-ACP. The polypeptide is Glycerol-3-phosphate acyltransferase (Helicobacter pylori (strain ATCC 700392 / 26695) (Campylobacter pylori)).